The primary structure comprises 755 residues: Kojibiose phosphorylase (755 aa).

Tryptophan 333–aspartate 334 provides a ligand contact to substrate. Residue glutamate 473 is the Proton donor of the active site. Lysine 573–glutamine 574 serves as a coordination point for substrate.

Belongs to the glycosyl hydrolase 65 family.

It catalyses the reaction kojibiose + phosphate = beta-D-glucose 1-phosphate + D-glucose. Functionally, in vitro catalyzes the phosphorolysis of D-kojibiose into beta-D-glucose 1-phosphate and D-glucose. No other disaccharides tested substitute for D-kojibiose. In the reverse direction disaccharides can be formed from beta-D-glucose 1-phosphate plus D-glucose, L-sorbose, D-sorbitol, L-iditol or 1,5-anhydro-D-glucitol, but with low efficiency. The beta-D-glucose 1-phosphate product is the substrate for YcjU (AC P77366), the next apparent enzyme in the putative biochemical pathway encoded in this locus (yjcM to ycjW). This is Kojibiose phosphorylase (ycjT) from Escherichia coli (strain K12).